The chain runs to 97 residues: Large ribosomal subunit protein eL21 (97 aa).

A compositionally biased stretch (basic residues) spans 1–24 (MVQKPHSFRRKTRKKLRKHPRRRG). The segment at 1–25 (MVQKPHSFRRKTRKKLRKHPRRRGL) is disordered.

Belongs to the eukaryotic ribosomal protein eL21 family.

This is Large ribosomal subunit protein eL21 (rpl21e) from Pyrococcus horikoshii (strain ATCC 700860 / DSM 12428 / JCM 9974 / NBRC 100139 / OT-3).